A 342-amino-acid chain; its full sequence is MEGLHIFNGFSGSSEARARHAAHQLGIPLHVADVTETFDEEIVQYLTREYLVARTPNPCVVCNRKIKFKTLLYYADRLACHFVATGHYARVFHNRQTGRYALLRGLDQAKDQSYFLFLLGQEQLSRILFPLGELTKKEVRSVALTMGVEAVREKESQEICFIPDDDYKTFIERHMGSSPAIPGDIVDRSGRLLGSHNGIHSFTIGQRKGLHIAAPRPYYVLAIDREKNRVVVGHEEEQGFSGLIVSGVSWIDGESPREEVFETLVRIRYRHRGVSSVVCPLSAGDEICPATGRPADHEEAGDKLIIRFQEPQRAVAPGQAAVFYSDDRVIGGGWIEQGIPLD.

C62 acts as the Nucleophile in catalysis. A disulfide bond links C62 and C160. G86 provides a ligand contact to ATP. Residues 110-112 are interaction with tRNA; sequence KDQ. C160 serves as the catalytic Cysteine persulfide intermediate. Positions 268–269 are interaction with tRNA; it reads RY.

The protein belongs to the MnmA/TRMU family.

It is found in the cytoplasm. It catalyses the reaction S-sulfanyl-L-cysteinyl-[protein] + uridine(34) in tRNA + AH2 + ATP = 2-thiouridine(34) in tRNA + L-cysteinyl-[protein] + A + AMP + diphosphate + H(+). Functionally, catalyzes the 2-thiolation of uridine at the wobble position (U34) of tRNA, leading to the formation of s(2)U34. In Syntrophus aciditrophicus (strain SB), this protein is tRNA-specific 2-thiouridylase MnmA 2.